A 456-amino-acid polypeptide reads, in one-letter code: Probable tRNA(Ile)-lysidine synthase (456 aa).

Position 30–35 (30–35 (SGGVDS)) interacts with ATP.

The protein belongs to the tRNA(Ile)-lysidine synthase family.

The protein localises to the cytoplasm. The catalysed reaction is cytidine(34) in tRNA(Ile2) + L-lysine + ATP = lysidine(34) in tRNA(Ile2) + AMP + diphosphate + H(+). In terms of biological role, ligates lysine onto the cytidine present at position 34 of the AUA codon-specific tRNA(Ile) that contains the anticodon CAU, in an ATP-dependent manner. Cytidine is converted to lysidine, thus changing the amino acid specificity of the tRNA from methionine to isoleucine. This is Probable tRNA(Ile)-lysidine synthase from Schizosaccharomyces pombe (strain 972 / ATCC 24843) (Fission yeast).